The primary structure comprises 118 residues: MTNESEVGVKKAAELLRQGATMLEEACPICKMPLFKLKNGDVVCPVHGKVYIVKSDDEEKIVKRNLQLDEIESILIDGLYLSAKKMKEDPLDSERIVQIIRYLDALERLRKIKINSSE.

Belongs to the UPF0148 family.

The chain is UPF0148 protein M1627_1409 from Saccharolobus islandicus (strain M.16.27) (Sulfolobus islandicus).